A 151-amino-acid polypeptide reads, in one-letter code: Large ribosomal subunit protein uL13 (151 aa).

It belongs to the universal ribosomal protein uL13 family. Part of the 50S ribosomal subunit.

Its function is as follows. This protein is one of the early assembly proteins of the 50S ribosomal subunit, although it is not seen to bind rRNA by itself. It is important during the early stages of 50S assembly. The polypeptide is Large ribosomal subunit protein uL13 (Nostoc sp. (strain PCC 7120 / SAG 25.82 / UTEX 2576)).